The sequence spans 1053 residues: DIS3-like exonuclease 1 (1053 aa).

The region spanning Ala-236 to Ala-310 is the CSD1 domain. Positions Gly-306 to Gly-332 are disordered. A CSD2 domain is found at Ile-365–Asn-431. One can recognise an RNB domain in the interval Arg-465–Ser-816. At Ser-989 the chain carries Phosphoserine.

It belongs to the RNR ribonuclease family. In terms of assembly, component of the RNA exosome complex. The catalytically inactive RNA exosome core (Exo-9) complex is believed to associate with catalytic subunits EXOSC10, and DIS3 or DIS3L in cytoplasmic- and nuclear-specific RNA exosome complex forms. Requires Mg(2+) as cofactor.

Its subcellular location is the cytoplasm. The catalysed reaction is Exonucleolytic cleavage in the 3'- to 5'-direction to yield nucleoside 5'-phosphates.. Catalytic component of the RNA exosome complex which has 3'-&gt;5' exoribonuclease activity and participates in a multitude of cellular RNA processing and degradation events. In the cytoplasm, the RNA exosome complex is involved in general mRNA turnover and specifically degrades inherently unstable mRNAs containing AU-rich elements (AREs) within their 3' untranslated regions, and in RNA surveillance pathways, preventing translation of aberrant mRNAs. It seems to be involved in degradation of histone mRNA. The protein is DIS3-like exonuclease 1 (Dis3l) of Mus musculus (Mouse).